A 447-amino-acid polypeptide reads, in one-letter code: Na(+)-translocating NADH-quinone reductase subunit A (447 aa).

This sequence belongs to the NqrA family. Composed of six subunits; NqrA, NqrB, NqrC, NqrD, NqrE and NqrF.

The catalysed reaction is a ubiquinone + n Na(+)(in) + NADH + H(+) = a ubiquinol + n Na(+)(out) + NAD(+). In terms of biological role, NQR complex catalyzes the reduction of ubiquinone-1 to ubiquinol by two successive reactions, coupled with the transport of Na(+) ions from the cytoplasm to the periplasm. NqrA to NqrE are probably involved in the second step, the conversion of ubisemiquinone to ubiquinol. In Neisseria meningitidis serogroup B (strain ATCC BAA-335 / MC58), this protein is Na(+)-translocating NADH-quinone reductase subunit A.